A 347-amino-acid chain; its full sequence is Pre-B-cell leukemia transcription factor 1 (347 aa).

The interval M1 to V37 is disordered. Residues G38 to D232 enclose the PBC domain. The PBC-A stretch occupies residues D45–G124. The tract at residues A127 to D232 is PBC-B. A DNA-binding region (homeobox; TALE-type) is located at residues A233 to I295. Over residues V318–S331 the composition is skewed to polar residues. The interval V318–Q347 is disordered.

It belongs to the TALE/PBX homeobox family. In terms of assembly, forms a heterodimer with isoform 2 of meis1; the interaction is necessary for neural fate induction. In terms of tissue distribution, shows broad, weak expression from blastula through gastrula stages. At stage 14/15, expressed in a broad arc that gives rise to the forebrain and eyes. More intensely expressed in the lateral neural folds (presumptive neural crest) and as horizontal stripes in the posterior neural plate that give rise to the hindbrain. As development proceeds, expression progresses posteriorly along the neural folds and at stage 21, expression is pronounced in the prospective hindbrain and in migratory neural crest cells. At later stages (stage 26), expression becomes intense within the dorsal portion of the forebrain, and in the optic cup, caudal branchial arch, peripheral to the pronephric anlage, and in the dorsal anterior half of the spinal cord. Expression remains robust in the hindbrain but gradually becomes more restricted. At stage 28, expressed in the dorsal lateral portion of the neural tube and in the somatic layer of the lateral plate mesoderm that surrounds the pronephric anlage.

Its subcellular location is the nucleus. Acts as a transcriptional activator in complex with isoform 2 of meis1, to induce posterior neural and neural crest gene expression, and thereby specify hindbrain and neural crest cell fate. Binds to a highly conserved region in the promoter of the neural crest gene zic3. Required for the nuclear transport or retention of isoform 2 of meis1. This Xenopus laevis (African clawed frog) protein is Pre-B-cell leukemia transcription factor 1 (pbx1).